We begin with the raw amino-acid sequence, 58 residues long: UPF0337 protein SAV_738 (58 aa).

Residues 1–58 are disordered; it reads MAADEKAQANGEQAKGKVKKVVGGAAGNESLKGKGHAEESKGDLRAAKEKAKDAIKRK. The segment covering 31-58 has biased composition (basic and acidic residues); sequence LKGKGHAEESKGDLRAAKEKAKDAIKRK.

It belongs to the UPF0337 (CsbD) family.

This Streptomyces avermitilis (strain ATCC 31267 / DSM 46492 / JCM 5070 / NBRC 14893 / NCIMB 12804 / NRRL 8165 / MA-4680) protein is UPF0337 protein SAV_738.